A 977-amino-acid chain; its full sequence is Mast/stem cell growth factor receptor Kit (977 aa).

The first 25 residues, 1–25, serve as a signal peptide directing secretion; it reads MRGARGAWDFLFVLLLLLLVQTGSS. The Extracellular portion of the chain corresponds to 26–525; sequence QPSVSPGELS…QIHAHTLFTP (500 aa). 5 Ig-like C2-type domains span residues 27–112, 121–205, 212–309, 318–411, and 414–508; these read PSVS…VFVR, DLPL…LKVR, PVVS…LEVV, PMMN…VYVN, and PEIL…FNFA. A disulfide bridge links Cys-58 with Cys-97. Residues Asn-94, Asn-130, and Asn-145 are each glycosylated (N-linked (GlcNAc...) asparagine). 3 disulfides stabilise this stretch: Cys-136/Cys-186, Cys-151/Cys-183, and Cys-233/Cys-291. 9 N-linked (GlcNAc...) asparagine glycosylation sites follow: Asn-284, Asn-294, Asn-301, Asn-321, Asn-353, Asn-368, Asn-401, Asn-464, and Asn-487. Cys-429 and Cys-492 are disulfide-bonded. The chain crosses the membrane as a helical span at residues 526–546; that stretch reads LLIGFVIAAGLMCIFVMILTY. The Cytoplasmic portion of the chain corresponds to 547 to 977; that stretch reads KYLQKPMYEV…TQPLLVHEDV (431 aa). 2 positions are modified to phosphotyrosine: Tyr-548 and Tyr-554. Residue Tyr-569 coordinates Mg(2+). A phosphotyrosine; by autocatalysis mark is found at Tyr-569 and Tyr-571. The segment at 569–571 is important for interaction with phosphotyrosine-binding proteins; that stretch reads YVY. The Protein kinase domain maps to 590–938; sequence LSFGKTLGAG…ISESTNHIYS (349 aa). ATP contacts are provided by residues 597–604, Lys-624, and 672–678; these read GAGAFGKV and EYCCYGD. Phosphotyrosine; by autocatalysis is present on residues Tyr-704 and Tyr-722. At Tyr-731 the chain carries Phosphotyrosine. Phosphoserine; by PKC/PRKCA is present on residues Ser-742 and Ser-747. Asp-793 acts as the Proton acceptor in catalysis. Arg-797 contributes to the ATP binding site. Residues Asn-798 and Asp-811 each coordinate Mg(2+). Ser-822 bears the Phosphoserine mark. Tyr-824 is modified (phosphotyrosine; by autocatalysis). Ser-892 is subject to Phosphoserine. A Phosphotyrosine modification is found at Tyr-901. At Tyr-937 the chain carries Phosphotyrosine; by autocatalysis. Ser-960 carries the post-translational modification Phosphoserine.

The protein belongs to the protein kinase superfamily. Tyr protein kinase family. CSF-1/PDGF receptor subfamily. As to quaternary structure, monomer in the absence of bound KITLG/SCF. Homodimer in the presence of bound KITLG/SCF, forming a heterotetramer with two KITLG/SCF molecules. Interacts (via phosphorylated tyrosine residues) with the adapter proteins GRB2 and GRB7 (via SH2 domain), and SH2B2/APS. Interacts (via C-terminus) with MPDZ (via the tenth PDZ domain). Interacts (via phosphorylated tyrosine residues) with PIK3R1 and PIK3CD. Interacts (via phosphorylated tyrosine) with CRK (isoform Crk-II), FYN, SHC1 and MATK/CHK (via SH2 domain). Interacts with LYN and FES/FPS. Interacts (via phosphorylated tyrosine residues) with the protein phosphatases PTPN6/SHP-1 (via SH2 domain), PTPN11/SHP-2 (via SH2 domain) and PTPRU. Interacts with PLCG1. Interacts with DOK1 and TEC. Interacts with IL1RAP (independent of stimulation with KITLG/SCF). A mast cell-specific KITLG/SCF-induced interleukin-33 signaling complex contains IL1RL1, IL1RAP, KIT and MYD88. Post-translationally, ubiquitinated by SOCS6. KIT is rapidly ubiquitinated after autophosphorylation induced by KITLG/SCF binding, leading to internalization and degradation. Autophosphorylated on tyrosine residues. KITLG/SCF binding promotes autophosphorylation. Phosphorylated tyrosine residues are important for interaction with specific binding partners.

It localises to the cell membrane. It catalyses the reaction L-tyrosyl-[protein] + ATP = O-phospho-L-tyrosyl-[protein] + ADP + H(+). With respect to regulation, present in an inactive conformation in the absence of bound ligand. KITLG/SCF binding leads to dimerization and activation by autophosphorylation on tyrosine residues. Activity is down-regulated by PRKCA-mediated phosphorylation on serine residues. Functionally, tyrosine-protein kinase that acts as a cell-surface receptor for the cytokine KITLG/SCF and plays an essential role in the regulation of cell survival and proliferation, hematopoiesis, stem cell maintenance, gametogenesis, mast cell development, migration and function, and in melanogenesis. In response to KITLG/SCF binding, KIT can activate several signaling pathways. Phosphorylates PIK3R1, PLCG1, SH2B2/APS and CBL. Activates the AKT1 signaling pathway by phosphorylation of PIK3R1, the regulatory subunit of phosphatidylinositol 3-kinase. Activated KIT also transmits signals via GRB2 and activation of RAS, RAF1 and the MAP kinases MAPK1/ERK2 and/or MAPK3/ERK1. Promotes activation of STAT family members STAT1, STAT3, STAT5A and STAT5B. Activation of PLCG1 leads to the production of the cellular signaling molecules diacylglycerol and inositol 1,4,5-trisphosphate. KIT signaling is modulated by protein phosphatases, and by rapid internalization and degradation of the receptor. Activated KIT promotes phosphorylation of the protein phosphatases PTPN6/SHP-1 and PTPRU, and of the transcription factors STAT1, STAT3, STAT5A and STAT5B. Promotes phosphorylation of PIK3R1, CBL, CRK (isoform Crk-II), LYN, MAPK1/ERK2 and/or MAPK3/ERK1, PLCG1, SRC and SHC1. The sequence is that of Mast/stem cell growth factor receptor Kit (KIT) from Bos taurus (Bovine).